Reading from the N-terminus, the 335-residue chain is DNA-directed RNA polymerase subunit alpha (335 aa).

The alpha N-terminal domain (alpha-NTD) stretch occupies residues 1-231 (MVREKITVST…DLLIPFLHTK (231 aa)). The segment at 263 to 335 (KKMALKSIFI…FVIDLPKNKF (73 aa)) is alpha C-terminal domain (alpha-CTD).

Belongs to the RNA polymerase alpha chain family. As to quaternary structure, in plastids the minimal PEP RNA polymerase catalytic core is composed of four subunits: alpha, beta, beta', and beta''. When a (nuclear-encoded) sigma factor is associated with the core the holoenzyme is formed, which can initiate transcription.

It is found in the plastid. The protein resides in the chloroplast. The catalysed reaction is RNA(n) + a ribonucleoside 5'-triphosphate = RNA(n+1) + diphosphate. Functionally, DNA-dependent RNA polymerase catalyzes the transcription of DNA into RNA using the four ribonucleoside triphosphates as substrates. This Lactuca sativa (Garden lettuce) protein is DNA-directed RNA polymerase subunit alpha.